Reading from the N-terminus, the 239-residue chain is Pyridoxine 5'-phosphate synthase (239 aa).

A 3-amino-2-oxopropyl phosphate-binding site is contributed by Asn-7. Residue 9 to 10 (DH) coordinates 1-deoxy-D-xylulose 5-phosphate. Residue Arg-18 coordinates 3-amino-2-oxopropyl phosphate. His-43 (proton acceptor) is an active-site residue. The 1-deoxy-D-xylulose 5-phosphate site is built by Arg-45 and His-50. Glu-70 functions as the Proton acceptor in the catalytic mechanism. Thr-100 serves as a coordination point for 1-deoxy-D-xylulose 5-phosphate. The active-site Proton donor is the His-191. Residues Gly-192 and 213 to 214 (GH) contribute to the 3-amino-2-oxopropyl phosphate site.

This sequence belongs to the PNP synthase family. In terms of assembly, homooctamer; tetramer of dimers.

It is found in the cytoplasm. It catalyses the reaction 3-amino-2-oxopropyl phosphate + 1-deoxy-D-xylulose 5-phosphate = pyridoxine 5'-phosphate + phosphate + 2 H2O + H(+). It participates in cofactor biosynthesis; pyridoxine 5'-phosphate biosynthesis; pyridoxine 5'-phosphate from D-erythrose 4-phosphate: step 5/5. Catalyzes the complicated ring closure reaction between the two acyclic compounds 1-deoxy-D-xylulose-5-phosphate (DXP) and 3-amino-2-oxopropyl phosphate (1-amino-acetone-3-phosphate or AAP) to form pyridoxine 5'-phosphate (PNP) and inorganic phosphate. The chain is Pyridoxine 5'-phosphate synthase from Geobacter metallireducens (strain ATCC 53774 / DSM 7210 / GS-15).